The chain runs to 539 residues: MALATNSAAVSGGAAAAASSAPQPRLAATFLPMRRRTVSAVHAADPAKSNGPVQAAAKASSPSTVAAPEKKPVGLGKWTVDSWKAKKALQLPEYPSQEELDSVLKTIETFPPVVFAGEARHLEERLADAAMGRAFVLQGGDCAESFKEFNANNIRDTFRILLQMGAVLMFGGQMPVVKVVGRMAGQFAKPRSDSFEERDGVKLPSYRGDNINGDTFDEKSRVPDPQRMIRAYAQSVATLNLLRAFATGGYAAMQRVTQWNLDFMDHSEQGDRRYRELAHRVDEALGFMTAAGLTVDHPIMTTTDFWTSHECLLLPYEQSLTREDSTSGLFYDCSAHMLWVGERTRQLDGAHVEFLRGVANPLGIKVSDKMNPRDLVKLIEILNPSNKPGRITIITRMGAENMRVKLPHLIRAVRNSGQIVTWITDPMHGNTIKAPCGLKTRPFDSILAEVRAFFDVHDQEGSHPGGIHLEMTGQNVTECIGGSRTVTFDDLSDRYHTHCDPRLNASQSLELAFIIAERLRRRRMRSGVNSNLPLPPLAF.

Disordered regions lie at residues 1-23 and 41-70; these read MALA…SAPQ and VHAA…APEK. The transit peptide at 1-54 directs the protein to the chloroplast; sequence MALATNSAAVSGGAAAAASSAPQPRLAATFLPMRRRTVSAVHAADPAKSNGPVQ. Over residues 7–21 the composition is skewed to low complexity; it reads SAAVSGGAAAAASSA.

The protein belongs to the class-II DAHP synthase family.

Its subcellular location is the plastid. The protein localises to the chloroplast. The catalysed reaction is D-erythrose 4-phosphate + phosphoenolpyruvate + H2O = 7-phospho-2-dehydro-3-deoxy-D-arabino-heptonate + phosphate. Its pathway is metabolic intermediate biosynthesis; chorismate biosynthesis; chorismate from D-erythrose 4-phosphate and phosphoenolpyruvate: step 1/7. The protein is Phospho-2-dehydro-3-deoxyheptonate aldolase 2, chloroplastic (DAHPS2) of Oryza sativa subsp. japonica (Rice).